The sequence spans 493 residues: Tripartite motif-containing protein 5 (493 aa).

N-acetylalanine is present on Ala2. The segment at 15–59 (CPICLELLTQPLSLDCGHSFCQACLTANHKKSMLDKGESSCPVCR) adopts an RING-type zinc-finger fold. A Phosphoserine modification is found at Ser86. A B box-type zinc finger spans residues 90–132 (QKVDHCARHGEKLLLFCQEDGKVICWLCERSQEHRGHHTFLTE). Residues Cys95, His98, Cys117, and His123 each contribute to the Zn(2+) site. Positions 130 to 241 (LTEEVAREYQ…ISDLEHRLQG (112 aa)) form a coiled coil. Positions 185 to 198 (FEQLRDILDWEESN) are required for interaction with GABARAP and for autophagy. Positions 281–493 (LKGMLEVFRE…VPMTLCSPSS (213 aa)) constitute a B30.2/SPRY domain.

It belongs to the TRIM/RBCC family. In terms of assembly, can form homodimers and homotrimers. In addition to lower-order dimerization, also exhibits a higher-order multimerization and both low- and high-order multimerizations are essential for its restriction activity. Isoform Delta interacts with BTBD1 and BTBD2. Interacts with PSMC4, PSMC5, PSMD7 and HSPA8/HSC70. Interacts (via B30.2/SPRY domain) with HSPA1A/B. Interacts with PSMC2, MAP3K7/TAK1, TAB2 and TAB3. Interacts with SQSTM1. Interacts with TRIM6 and TRIM34. Interacts with ULK1 (phosphorylated form), GABARAP, GABARAPL1, GABARAPL2, MAP1LC3A, MAP1LC3C and BECN1. In terms of processing, degraded in a proteasome-independent fashion in the absence of viral infection but in a proteasome-dependent fashion following exposure to restriction sensitive virus. Post-translationally, autoubiquitinated in a RING finger- and UBE2D2-dependent manner. Monoubiquitinated by TRIM21. Deubiquitinated by Yersinia YopJ. Ubiquitination may not lead to proteasomal degradation.

The protein resides in the cytoplasm. The protein localises to the nucleus. It carries out the reaction S-ubiquitinyl-[E2 ubiquitin-conjugating enzyme]-L-cysteine + [acceptor protein]-L-lysine = [E2 ubiquitin-conjugating enzyme]-L-cysteine + N(6)-ubiquitinyl-[acceptor protein]-L-lysine.. It participates in protein modification; protein ubiquitination. Functionally, capsid-specific restriction factor that prevents infection from non-host-adapted retroviruses. Blocks viral replication early in the life cycle, after viral entry but before reverse transcription. In addition to acting as a capsid-specific restriction factor, also acts as a pattern recognition receptor that activates innate immune signaling in response to the retroviral capsid lattice. Binding to the viral capsid triggers its E3 ubiquitin ligase activity, and in concert with the heterodimeric ubiquitin conjugating enzyme complex UBE2V1-UBE2N (also known as UBC13-UEV1A complex) generates 'Lys-63'-linked polyubiquitin chains, which in turn are catalysts in the autophosphorylation of the MAP3K7/TAK1 complex (includes TAK1, TAB2, and TAB3). Activation of the MAP3K7/TAK1 complex by autophosphorylation results in the induction and expression of NF-kappa-B and MAPK-responsive inflammatory genes, thereby leading to an innate immune response in the infected cell. Restricts infection by N-tropic murine leukemia virus (N-MLV), equine infectious anemia virus (EIAV), simian immunodeficiency virus of macaques (SIVmac), feline immunodeficiency virus (FIV), and bovine immunodeficiency virus (BIV). Plays a role in regulating autophagy through activation of autophagy regulator BECN1 by causing its dissociation from its inhibitors BCL2 and TAB2. Also plays a role in autophagy by acting as a selective autophagy receptor which recognizes and targets HIV-1 capsid protein p24 for autophagic destruction. The sequence is that of Tripartite motif-containing protein 5 (TRIM5) from Homo sapiens (Human).